The following is a 160-amino-acid chain: Troponin C, skeletal muscle (160 aa).

4 consecutive EF-hand domains span residues 15–50 (EMIA…LGQN), 51–86 (PTRE…QLKE), 91–126 (KSEE…SGEP), and 127–160 (VSEE…ENIQ). Positions 28, 30, 34, 39, 64, 66, 68, 70, 75, 104, 106, 108, 115, 140, 142, 144, 146, and 151 each coordinate Ca(2+).

This sequence belongs to the troponin C family.

Its function is as follows. Troponin is the central regulatory protein of striated muscle contraction. Tn consists of three components: Tn-I which is the inhibitor of actomyosin ATPase, Tn-T which contains the binding EF-hand for tropomyosin and Tn-C. The binding of calcium to Tn-C abolishes the inhibitory action of Tn on actin filaments. This chain is Troponin C, skeletal muscle, found in Anguilla anguilla (European freshwater eel).